The following is a 348-amino-acid chain: D-alanine--D-alanine ligase (348 aa).

In terms of domain architecture, ATP-grasp spans 132-334 (KRVLESIGIP…YPDLIEELVT (203 aa)). 162–217 (LARLTFPIFVKPANMGSSVGISKAQTKVELRKAIQLALTYDSRVLIEQGVVAREIE) is an ATP binding site. Aspartate 288, glutamate 301, and asparagine 303 together coordinate Mg(2+).

Belongs to the D-alanine--D-alanine ligase family. Requires Mg(2+) as cofactor. Mn(2+) is required as a cofactor.

The protein localises to the cytoplasm. It carries out the reaction 2 D-alanine + ATP = D-alanyl-D-alanine + ADP + phosphate + H(+). It participates in cell wall biogenesis; peptidoglycan biosynthesis. In terms of biological role, cell wall formation. The sequence is that of D-alanine--D-alanine ligase from Streptococcus pyogenes serotype M18 (strain MGAS8232).